The following is a 253-amino-acid chain: tRNA-cytidine(32) 2-sulfurtransferase 2 (253 aa).

A PP-loop motif motif is present at residues 33–38 (SGGKDS). [4Fe-4S] cluster contacts are provided by Cys108, Cys111, and Cys199.

This sequence belongs to the TtcA family. In terms of assembly, homodimer. Mg(2+) is required as a cofactor. [4Fe-4S] cluster serves as cofactor.

It is found in the cytoplasm. It carries out the reaction cytidine(32) in tRNA + S-sulfanyl-L-cysteinyl-[cysteine desulfurase] + AH2 + ATP = 2-thiocytidine(32) in tRNA + L-cysteinyl-[cysteine desulfurase] + A + AMP + diphosphate + H(+). It participates in tRNA modification. In terms of biological role, catalyzes the ATP-dependent 2-thiolation of cytidine in position 32 of tRNA, to form 2-thiocytidine (s(2)C32). The sulfur atoms are provided by the cysteine/cysteine desulfurase (IscS) system. In Francisella tularensis subsp. novicida (strain U112), this protein is tRNA-cytidine(32) 2-sulfurtransferase 2.